The sequence spans 621 residues: Hemolysin ahh1 (621 aa).

A signal peptide spans 1-30 (MKNKKPRKFITQAPTLSLLALALLAGSVQA). A Ricin B-type lectin domain is found at 491-610 (RPVNLQLGGF…QNVSVRTLTS (120 aa)).

The protein belongs to the HlyA hemolysin family.

Its function is as follows. Bacterial hemolysins are exotoxins that attack blood cell membranes and cause cell rupture by mechanisms not clearly defined. This Aeromonas hydrophila subsp. hydrophila (strain ATCC 7966 / DSM 30187 / BCRC 13018 / CCUG 14551 / JCM 1027 / KCTC 2358 / NCIMB 9240 / NCTC 8049) protein is Hemolysin ahh1 (ahh1).